A 1905-amino-acid chain; its full sequence is Microtubule cross-linking factor 1 (1905 aa).

The interval 1-249 is necessary for colocalization and binding with microtubules; the sequence is METLNGPAGG…SSDREPPRGA (249 aa). Residues 1-329 form a disordered region; that stretch reads METLNGPAGG…SLGEQSRLVP (329 aa). The segment at 1–508 is necessary for self-assembly, microtubule bundling activity and apicobasal microtubule organization; that stretch reads METLNGPAGG…QDDSADLRCQ (508 aa). Residues 22-40 are compositionally biased toward basic residues; sequence QHHRHHHLHPVAERRRLHR. Composition is skewed to low complexity over residues 63–95 and 115–130; these read VPSSGRAPAPAAPRSPNLAGKAPPSPGSLAAPG and AGARAAGGAKAALGSR. Residues serine 77 and serine 87 each carry the phosphoserine modification. A phosphoserine mark is found at serine 217, serine 221, and serine 263. Residues 268–283 are compositionally biased toward low complexity; it reads ALLAAPLAAGACPGGR. Coiled coils occupy residues 330–404, 432–483, and 513–718; these read AAEE…EQKS, SVRL…SSLK, and KEEA…LQHE. Disordered regions lie at residues 544–563, 601–631, 671–694, 737–800, and 842–867; these read YGDVDSPLPTGEAGGPPSTR, DMRGQQEREGPGRDHAPSIPTSPFGDSLESS, FEPPREPGWLGEGASPGAGGGAPL, LRAP…SEPC, and AGLRGGAPLPGPGLQGEEEQGEGDQQ. Serine 549 is modified (phosphoserine). Residues 601-616 show a composition bias toward basic and acidic residues; it reads DMRGQQEREGPGRDHA. Serine 618 bears the Phosphoserine mark. The residue at position 621 (threonine 621) is a Phosphothreonine. The span at 680-692 shows a compositional bias: gly residues; it reads LGEGASPGAGGGA. Phosphoserine is present on serine 685. Positions 741-770 are enriched in basic and acidic residues; the sequence is SPRDSDAESDAGKKESDGEESRLPQPKREG. Phosphoserine is present on serine 776. Over residues 857 to 866 the composition is skewed to acidic residues; it reads GEEEQGEGDQ. Phosphoserine is present on residues serine 901, serine 923, lysine 941, and threonine 975. The disordered stretch occupies residues 1080–1100; it reads GVQGGHQADGPDHDSDRGCGF. 2 coiled-coil regions span residues 1143-1201 and 1238-1278; these read KALL…ELGS and EKNW…KENS. The interval 1265-1382 is necessary for interaction with MARK2 and apicobasal microtubule bundle formation in polarized epithelial cells; sequence EFLWRIEQLQ…EENHKGNLQR (118 aa). Residue serine 1278 is modified to Phosphoserine. The disordered stretch occupies residues 1346–1384; that stretch reads ALSLDDEPEEPPAHRPEREFRNRLPEEEENHKGNLQRAV. The span at 1356-1377 shows a compositional bias: basic and acidic residues; sequence PPAHRPEREFRNRLPEEEENHK. A phosphoserine mark is found at serine 1385, serine 1388, and serine 1399. Threonine 1417 bears the Phosphothreonine mark. Serine 1421 bears the Phosphoserine mark. Tyrosine 1427 is modified (phosphotyrosine). Residues 1485 to 1505 form a disordered region; sequence DTMTSPEHCQKQPLRSHVLTE. 7 positions are modified to phosphoserine: serine 1514, serine 1523, serine 1561, serine 1578, serine 1583, serine 1592, and serine 1661. Positions 1524–1569 are disordered; it reads ITAAGGEGPFPTSRARGSPGDTKGGPPEPMLSRWPCTSPRHSRDYV. Disordered stretches follow at residues 1655–1689, 1707–1756, 1782–1842, and 1863–1905; these read GSGVTSSPHKCLTPKAGGGATPVSSPSRSLRSRQV, PKYG…PVHT, GLRA…APPG, and KEER…PWGL. Threonine 1667 and threonine 1675 each carry phosphothreonine. Residues 1678–1687 are compositionally biased toward low complexity; the sequence is SSPSRSLRSR. The tract at residues 1678–1773 is necessary for colocalization and binding with microtubules; it reads SSPSRSLRSR…SLFNIIDHSP (96 aa). Residues serine 1679 and serine 1683 each carry the phosphoserine modification. The segment covering 1744–1756 has biased composition (polar residues); that stretch reads ARSTTTRESPVHT. Residues serine 1791, serine 1808, serine 1812, and serine 1814 each carry the phosphoserine modification.

It belongs to the SOGA family. As to quaternary structure, homodimer. Associates (via N- and C-terminus domains) with microtubule filaments. Interacts with MARK2; the interaction is direct. Phosphorylated during mitosis in a CDK1-dependent manner.

It is found in the lateral cell membrane. The protein resides in the apical cell membrane. Its subcellular location is the cytoplasm. It localises to the cytoskeleton. The protein localises to the spindle pole. It is found in the midbody. Functionally, microtubule-associated factor involved in the late phase of epithelial polarization and microtubule dynamics regulation. Plays a role in the development and maintenance of non-centrosomal microtubule bundles at the lateral membrane in polarized epithelial cells. Required for faithful chromosome segregation during mitosis. This chain is Microtubule cross-linking factor 1 (MTCL1), found in Homo sapiens (Human).